The sequence spans 146 residues: D-aminoacyl-tRNA deacylase (146 aa).

A Gly-cisPro motif, important for rejection of L-amino acids motif is present at residues 137–138; sequence GP.

The protein belongs to the DTD family. Homodimer.

The protein localises to the cytoplasm. The enzyme catalyses glycyl-tRNA(Ala) + H2O = tRNA(Ala) + glycine + H(+). It catalyses the reaction a D-aminoacyl-tRNA + H2O = a tRNA + a D-alpha-amino acid + H(+). In terms of biological role, an aminoacyl-tRNA editing enzyme that deacylates mischarged D-aminoacyl-tRNAs. Also deacylates mischarged glycyl-tRNA(Ala), protecting cells against glycine mischarging by AlaRS. Acts via tRNA-based rather than protein-based catalysis; rejects L-amino acids rather than detecting D-amino acids in the active site. By recycling D-aminoacyl-tRNA to D-amino acids and free tRNA molecules, this enzyme counteracts the toxicity associated with the formation of D-aminoacyl-tRNA entities in vivo and helps enforce protein L-homochirality. The polypeptide is D-aminoacyl-tRNA deacylase (Halalkalibacterium halodurans (strain ATCC BAA-125 / DSM 18197 / FERM 7344 / JCM 9153 / C-125) (Bacillus halodurans)).